A 382-amino-acid chain; its full sequence is D-galactonate dehydratase (382 aa).

Aspartate 183 lines the Mg(2+) pocket. Catalysis depends on histidine 185, which acts as the Proton donor. Mg(2+) is bound by residues glutamate 209 and glutamate 235. Catalysis depends on histidine 285, which acts as the Proton acceptor.

It belongs to the mandelate racemase/muconate lactonizing enzyme family. GalD subfamily. The cofactor is Mg(2+).

The catalysed reaction is D-galactonate = 2-dehydro-3-deoxy-D-galactonate + H2O. It participates in carbohydrate acid metabolism; D-galactonate degradation; D-glyceraldehyde 3-phosphate and pyruvate from D-galactonate: step 1/3. Functionally, catalyzes the dehydration of D-galactonate to 2-keto-3-deoxy-D-galactonate. In Escherichia coli (strain UTI89 / UPEC), this protein is D-galactonate dehydratase.